We begin with the raw amino-acid sequence, 139 residues long: mRNA stability protein mug134 (139 aa).

Residues 83 to 139 (IGKEIPSPDTIPHRVVSAGSPNKEPSLHTKRPSESSPSGASSRRESVTRHDLESNEN) are disordered. The span at 124 to 139 (SRRESVTRHDLESNEN) shows a compositional bias: basic and acidic residues.

Belongs to the endosulfine family.

The protein resides in the nucleus. Its subcellular location is the cytoplasm. Its function is as follows. Plays an essential role in initiation of the G0 program by preventing the degradation of specific nutrient-regulated mRNAs via the 5'-3' mRNA decay pathway. The protein is mRNA stability protein mug134 (mug134) of Schizosaccharomyces pombe (strain 972 / ATCC 24843) (Fission yeast).